Here is a 90-residue protein sequence, read N- to C-terminus: Probable Fe(2+)-trafficking protein (90 aa).

The protein belongs to the Fe(2+)-trafficking protein family.

Could be a mediator in iron transactions between iron acquisition and iron-requiring processes, such as synthesis and/or repair of Fe-S clusters in biosynthetic enzymes. The protein is Probable Fe(2+)-trafficking protein of Dechloromonas aromatica (strain RCB).